Consider the following 511-residue polypeptide: Xylose import ATP-binding protein XylG (511 aa).

ABC transporter domains are found at residues 6–244 (LEMR…VGRE) and 261–506 (FEAR…IGKP).

Belongs to the ABC transporter superfamily. Xylose importer (TC 3.A.1.2.4) family. As to quaternary structure, the complex is composed of two ATP-binding proteins (XylG), two transmembrane proteins (XylH) and a solute-binding protein (XylF).

The protein localises to the cell inner membrane. The catalysed reaction is D-xylose(out) + ATP + H2O = D-xylose(in) + ADP + phosphate + H(+). In terms of biological role, part of the ABC transporter complex XylFGH involved in xylose import. Responsible for energy coupling to the transport system. This Brucella melitensis biotype 1 (strain ATCC 23456 / CCUG 17765 / NCTC 10094 / 16M) protein is Xylose import ATP-binding protein XylG.